The sequence spans 439 residues: Alpha-1,3-mannosyl-glycoprotein 4-beta-N-acetylglucosaminyltransferase-like protein MGAT4E (439 aa).

It functions in the pathway protein modification; protein glycosylation. In terms of biological role, glycosyltransferase-like protein that may participate in the transfer of N-acetylglucosamine (GlcNAc) to the core mannose residues of N-linked glycans. In Mus musculus (Mouse), this protein is Alpha-1,3-mannosyl-glycoprotein 4-beta-N-acetylglucosaminyltransferase-like protein MGAT4E.